Consider the following 447-residue polypeptide: Rab GDP dissociation inhibitor alpha (447 aa).

Position 427 is a phosphoserine (S427).

This sequence belongs to the Rab GDI family. As to quaternary structure, interacts with RHOH. Interacts with the non-phosphorylated forms of RAB1A, RAB3A, RAB5A, RAB5B, RAB5C, RAB8A, RAB8B, RAB12, RAB35, and RAB43. Interacts with RAB10. High expression in brain, lower in other tissues.

It is found in the cytoplasm. It localises to the golgi apparatus. The protein resides in the trans-Golgi network. Regulates the GDP/GTP exchange reaction of most Rab proteins by inhibiting the dissociation of GDP from them, and the subsequent binding of GTP to them. Promotes the dissociation of GDP-bound Rab proteins from the membrane and inhibits their activation. Promotes the dissociation of RAB1A, RAB3A, RAB5A and RAB10 from membranes. The protein is Rab GDP dissociation inhibitor alpha (Gdi1) of Mus musculus (Mouse).